Reading from the N-terminus, the 97-residue chain is Large ribosomal subunit protein eL21 (97 aa).

It belongs to the eukaryotic ribosomal protein eL21 family.

The chain is Large ribosomal subunit protein eL21 (rpl21e) from Archaeoglobus fulgidus (strain ATCC 49558 / DSM 4304 / JCM 9628 / NBRC 100126 / VC-16).